Here is a 396-residue protein sequence, read N- to C-terminus: Elongation factor Tu 2 (396 aa).

In terms of domain architecture, tr-type G spans lysine 10 to glutamine 206. The interval glycine 19–threonine 26 is G1. Glycine 19 to threonine 26 contributes to the GTP binding site. Mg(2+) is bound at residue threonine 26. Residues glycine 60 to serine 64 are G2. Residues aspartate 81–glycine 84 are G3. GTP contacts are provided by residues aspartate 81–histidine 85 and asparagine 136–aspartate 139. Residues asparagine 136–aspartate 139 are G4. The interval serine 174–leucine 176 is G5.

Belongs to the TRAFAC class translation factor GTPase superfamily. Classic translation factor GTPase family. EF-Tu/EF-1A subfamily. In terms of assembly, monomer.

The protein localises to the cytoplasm. The enzyme catalyses GTP + H2O = GDP + phosphate + H(+). GTP hydrolase that promotes the GTP-dependent binding of aminoacyl-tRNA to the A-site of ribosomes during protein biosynthesis. This chain is Elongation factor Tu 2, found in Myxococcus xanthus (strain DK1622).